Here is a 442-residue protein sequence, read N- to C-terminus: tRNA-2-methylthio-N(6)-dimethylallyladenosine synthase (442 aa).

Residues Lys-2–Thr-120 enclose the MTTase N-terminal domain. Residues Cys-11, Cys-49, Cys-83, Cys-157, Cys-161, and Cys-164 each coordinate [4Fe-4S] cluster. One can recognise a Radical SAM core domain in the interval Arg-143 to Arg-375. Residues Gln-378 to Glu-441 form the TRAM domain.

This sequence belongs to the methylthiotransferase family. MiaB subfamily. Monomer. [4Fe-4S] cluster serves as cofactor.

The protein localises to the cytoplasm. The catalysed reaction is N(6)-dimethylallyladenosine(37) in tRNA + (sulfur carrier)-SH + AH2 + 2 S-adenosyl-L-methionine = 2-methylsulfanyl-N(6)-dimethylallyladenosine(37) in tRNA + (sulfur carrier)-H + 5'-deoxyadenosine + L-methionine + A + S-adenosyl-L-homocysteine + 2 H(+). Functionally, catalyzes the methylthiolation of N6-(dimethylallyl)adenosine (i(6)A), leading to the formation of 2-methylthio-N6-(dimethylallyl)adenosine (ms(2)i(6)A) at position 37 in tRNAs that read codons beginning with uridine. In Neisseria gonorrhoeae (strain NCCP11945), this protein is tRNA-2-methylthio-N(6)-dimethylallyladenosine synthase.